The sequence spans 412 residues: Alpha-1-antitrypsin 1-3 (412 aa).

A signal peptide spans 1–24 (MTPSISWGLLLLAGLCCLVPSFLA). 3 N-linked (GlcNAc...) asparagine glycosylation sites follow: Asn-64, Asn-101, and Asn-265. The tract at residues 368–387 (AVTVLLAVPYSMPPILRFDH) is RCL.

This sequence belongs to the serpin family.

It is found in the secreted. In terms of biological role, inhibitor of serine proteases. Can inhibit trypsin and chymotrypsin; relatively ineffective against elastase. The protein is Alpha-1-antitrypsin 1-3 (Serpina1c) of Mus musculus (Mouse).